The sequence spans 381 residues: Endophilin-A homolog (381 aa).

The membrane-binding amphipathic helix stretch occupies residues 1-21 (MSLSGLRKQFNKANQYLSETM). A BAR domain is found at 18–247 (SETMGAAEPT…LGHRIKDAAA (230 aa)). Residues 170 to 238 (CKKRQQRRDD…QCLENLQQQL (69 aa)) are a coiled coil. The disordered stretch occupies residues 246-323 (AARPREEHVP…PPPLSQQQKP (78 aa)). Polar residues predominate over residues 260-271 (ANESRTPRSSFR). Residues 305–317 (YQGPPPGGLPPPL) show a composition bias toward pro residues. In terms of domain architecture, SH3 spans 320–379 (QQKPQCRALFDFDAQSEGELDFKEGTLIELVSQIDENWYEGRVNGKTGLFPVTYVQVLVP).

This sequence belongs to the endophilin family. May form a homodimer (via the BAR domain). As to expression, expressed in neurons and posterior intestine.

Its subcellular location is the synapse. The protein localises to the cytoplasmic vesicle. It localises to the secretory vesicle. The protein resides in the synaptic vesicle. It is found in the membrane. Its function is as follows. Involved in synaptic vesicle (SV) recycling in neurons probably by regulating clathrin-mediated endocytosis. By controlling SV endocytosis, regulates the rate of excitatory postsynaptic currents (EPSCs) at neuromuscular junctions and thus locomotion. In a similar manner, involved in necrotic neuronal cell death induced by abnormal hyperactivation of ion channels. Plays a minor role in responses to mechanical stimuli. Plays a minor role in unc-26/synaptojanin localization to synapses. This is Endophilin-A homolog from Caenorhabditis elegans.